A 171-amino-acid chain; its full sequence is Neuronal vesicle trafficking-associated protein 2 (171 aa).

The disordered stretch occupies residues 1 to 21 (MVKLNSNPSEKGAKPPSVEDG). Residues 1–71 (MVKLNSNPSE…FRVPKIAEFT (71 aa)) lie on the Cytoplasmic side of the membrane. A helical; Signal-anchor for type II membrane protein transmembrane segment spans residues 72-92 (VTILVSLALAFLACIVFLVVY). At 93 to 171 (KAFTYDHSCP…EPKPPKTQGH (79 aa)) the chain is on the lumenal side.

This sequence belongs to the NSG family.

It is found in the membrane. The protein resides in the golgi apparatus. It localises to the trans-Golgi network membrane. Its subcellular location is the cell projection. The protein localises to the dendrite. It is found in the endosome membrane. The protein resides in the early endosome membrane. It localises to the late endosome membrane. Its subcellular location is the lysosome lumen. The protein localises to the cytoplasmic vesicle membrane. It is found in the golgi stack membrane. The protein resides in the endosome. It localises to the multivesicular body membrane. The chain is Neuronal vesicle trafficking-associated protein 2 from Bos taurus (Bovine).